Consider the following 110-residue polypeptide: UPF0060 membrane protein BPSL1340 (110 aa).

4 helical membrane passes run 9–29 (ALFVLTAVAEIVGCYLPWLVL), 34–54 (PAWLLAPAALSLALFAWLLTL), 64–84 (AAYGGVYIAVALAWLRIVDGV), and 86–106 (LSRWDVAGAALALAGMSVIAL).

It belongs to the UPF0060 family.

The protein resides in the cell inner membrane. The sequence is that of UPF0060 membrane protein BPSL1340 from Burkholderia pseudomallei (strain K96243).